A 729-amino-acid polypeptide reads, in one-letter code: Transketolase (729 aa).

His97 is a binding site for substrate. Thiamine diphosphate is bound by residues His138 and 186–188; that span reads GPL. Residue Asp227 coordinates Mg(2+). 2 residues coordinate thiamine diphosphate: Gly228 and Asn257. Mg(2+) contacts are provided by Asn257 and Ile259. Substrate is bound by residues His332, Arg423, and Ser450. His332 serves as a coordination point for thiamine diphosphate. Catalysis depends on Glu477, which acts as the Proton donor. Thiamine diphosphate is bound at residue Phe503. 3 residues coordinate substrate: His527, Asp535, and Arg586.

The protein belongs to the transketolase family. In terms of assembly, homodimer. The cofactor is Mg(2+). Requires Ca(2+) as cofactor. It depends on Mn(2+) as a cofactor. Co(2+) is required as a cofactor. Thiamine diphosphate serves as cofactor.

It carries out the reaction D-sedoheptulose 7-phosphate + D-glyceraldehyde 3-phosphate = aldehydo-D-ribose 5-phosphate + D-xylulose 5-phosphate. Functionally, catalyzes the transfer of a two-carbon ketol group from a ketose donor to an aldose acceptor, via a covalent intermediate with the cofactor thiamine pyrophosphate. This chain is Transketolase, found in Streptococcus pyogenes serotype M6 (strain ATCC BAA-946 / MGAS10394).